The primary structure comprises 191 residues: Protein GrpE (191 aa).

Belongs to the GrpE family. In terms of assembly, homodimer.

Its subcellular location is the cytoplasm. Participates actively in the response to hyperosmotic and heat shock by preventing the aggregation of stress-denatured proteins, in association with DnaK and GrpE. It is the nucleotide exchange factor for DnaK and may function as a thermosensor. Unfolded proteins bind initially to DnaJ; upon interaction with the DnaJ-bound protein, DnaK hydrolyzes its bound ATP, resulting in the formation of a stable complex. GrpE releases ADP from DnaK; ATP binding to DnaK triggers the release of the substrate protein, thus completing the reaction cycle. Several rounds of ATP-dependent interactions between DnaJ, DnaK and GrpE are required for fully efficient folding. The sequence is that of Protein GrpE from Nitratidesulfovibrio vulgaris (strain ATCC 29579 / DSM 644 / CCUG 34227 / NCIMB 8303 / VKM B-1760 / Hildenborough) (Desulfovibrio vulgaris).